The sequence spans 664 residues: Glycine--tRNA ligase beta subunit (664 aa).

The protein belongs to the class-II aminoacyl-tRNA synthetase family. In terms of assembly, tetramer of two alpha and two beta subunits.

Its subcellular location is the cytoplasm. The enzyme catalyses tRNA(Gly) + glycine + ATP = glycyl-tRNA(Gly) + AMP + diphosphate. This chain is Glycine--tRNA ligase beta subunit, found in Rickettsia peacockii (strain Rustic).